The chain runs to 286 residues: 2-hydroxy-6-oxo-6-phenylhexa-2,4-dienoate hydrolase (286 aa).

Residues Gly42–Gly43, Asn51, Lys111, Ser180, and Arg190 each bind substrate. One can recognise an AB hydrolase-1 domain in the interval Asn173–His271. Residue His265 is the Proton acceptor of the active site. Residue Trp266 participates in substrate binding.

It belongs to the AB hydrolase superfamily. BphD family. Homodimer.

It catalyses the reaction 2,6-dioxo-6-phenylhexa-3-enoate + H2O = 2-oxopent-4-enoate + benzoate + H(+). It participates in xenobiotic degradation; biphenyl degradation; 2-hydroxy-2,4-pentadienoate and benzoate from biphenyl: step 4/4. Functionally, catalyzes an unusual C-C bond hydrolysis of 2-hydroxy-6-oxo-6-phenylhexa-2,4-dienoic acid (HOPDA) to produce benzoic acid and 2-hydroxy-2,4-pentadienoic acid (HPD). The protein is 2-hydroxy-6-oxo-6-phenylhexa-2,4-dienoate hydrolase of Delftia acidovorans (Pseudomonas acidovorans).